The following is a 667-amino-acid chain: Protein MAIN-LIKE 2 (667 aa).

Methionine 1 carries the N-acetylmethionine modification. Residues methionine 492–lysine 508 show a composition bias toward basic residues. Disordered regions lie at residues methionine 492–serine 523 and lysine 594–alanine 667. Over residues proline 512 to serine 523 the composition is skewed to acidic residues. 2 stretches are compositionally biased toward basic and acidic residues: residues tyrosine 608–lysine 618 and serine 656–alanine 667.

In terms of tissue distribution, expressed in root tips, the shoot apical meristem (SAM), leaves, mature flowers and embryos.

Its subcellular location is the nucleus. Functionally, maybe required to maintain cell division activity in meristematic cells. This is Protein MAIN-LIKE 2 from Arabidopsis thaliana (Mouse-ear cress).